Here is a 171-residue protein sequence, read N- to C-terminus: 3-hydroxydecanoyl-[acyl-carrier-protein] dehydratase (171 aa).

The active site involves histidine 70.

The protein belongs to the thioester dehydratase family. FabA subfamily. Homodimer.

The protein resides in the cytoplasm. The catalysed reaction is a (3R)-hydroxyacyl-[ACP] = a (2E)-enoyl-[ACP] + H2O. It catalyses the reaction (3R)-hydroxydecanoyl-[ACP] = (2E)-decenoyl-[ACP] + H2O. The enzyme catalyses (2E)-decenoyl-[ACP] = (3Z)-decenoyl-[ACP]. It functions in the pathway lipid metabolism; fatty acid biosynthesis. Its function is as follows. Necessary for the introduction of cis unsaturation into fatty acids. Catalyzes the dehydration of (3R)-3-hydroxydecanoyl-ACP to E-(2)-decenoyl-ACP and then its isomerization to Z-(3)-decenoyl-ACP. Can catalyze the dehydratase reaction for beta-hydroxyacyl-ACPs with saturated chain lengths up to 16:0, being most active on intermediate chain length. In Colwellia psychrerythraea (strain 34H / ATCC BAA-681) (Vibrio psychroerythus), this protein is 3-hydroxydecanoyl-[acyl-carrier-protein] dehydratase.